Reading from the N-terminus, the 418-residue chain is Zinc metalloproteinase-disintegrin-like batroxstatin-2 (418 aa).

The Peptidase M12B domain occupies 10 to 206 (KYVKLVLVAD…DMPQCILEKP (197 aa)). Disulfide bonds link cysteine 121-cysteine 201, cysteine 161-cysteine 185, and cysteine 163-cysteine 168. Histidine 146 contacts Zn(2+). Glutamate 147 is a catalytic residue. Residues histidine 150 and histidine 156 each contribute to the Zn(2+) site. The 86-residue stretch at 214-299 (PPVCGNYFVE…AECTDRFQRN (86 aa)) folds into the Disintegrin domain. 6 residues coordinate Ca(2+): valine 216, asparagine 219, phenylalanine 221, glutamate 223, glutamate 226, and aspartate 229. 14 disulfide bridges follow: cysteine 217–cysteine 246, cysteine 228–cysteine 241, cysteine 230–cysteine 236, cysteine 240–cysteine 263, cysteine 254–cysteine 260, cysteine 259–cysteine 285, cysteine 272–cysteine 292, cysteine 279–cysteine 310, cysteine 303–cysteine 315, cysteine 322–cysteine 372, cysteine 337–cysteine 383, cysteine 350–cysteine 360, cysteine 367–cysteine 409, and cysteine 403–cysteine 414. The D/ECD-tripeptide signature appears at 278 to 280 (ECD). Positions 280, 281, 283, 294, and 295 each coordinate Ca(2+). N-linked (GlcNAc...) asparagine glycosylation occurs at asparagine 312.

It belongs to the venom metalloproteinase (M12B) family. P-III subfamily. P-IIIc sub-subfamily. As to quaternary structure, homodimer; disulfide-linked. Zn(2+) is required as a cofactor. Expressed by the venom gland.

The protein localises to the secreted. Snake venom zinc metalloprotease that induces apoptosis in vascular endothelial cells (VEC), without degrading the extracellular matrix (it cannot cleave collagen) or inhibiting adhesion of VEC. Has also fibrinogenolytic and hemorrhagic activities. This is Zinc metalloproteinase-disintegrin-like batroxstatin-2 from Bothrops atrox (Barba amarilla).